Reading from the N-terminus, the 209-residue chain is Guanylate kinase (209 aa).

Residues 5–182 (GLLIVISGPS…AVTKINSIIV (178 aa)) enclose the Guanylate kinase-like domain. An ATP-binding site is contributed by 12–19 (GPSGAGKG).

This sequence belongs to the guanylate kinase family.

It is found in the cytoplasm. It catalyses the reaction GMP + ATP = GDP + ADP. In terms of biological role, essential for recycling GMP and indirectly, cGMP. In Clostridium acetobutylicum (strain ATCC 824 / DSM 792 / JCM 1419 / IAM 19013 / LMG 5710 / NBRC 13948 / NRRL B-527 / VKM B-1787 / 2291 / W), this protein is Guanylate kinase.